Here is a 217-residue protein sequence, read N- to C-terminus: Cytidylate kinase (217 aa).

An ATP-binding site is contributed by 21–29; sequence GPAASGKGT.

It belongs to the cytidylate kinase family. Type 1 subfamily.

The protein resides in the cytoplasm. It carries out the reaction CMP + ATP = CDP + ADP. The catalysed reaction is dCMP + ATP = dCDP + ADP. This chain is Cytidylate kinase, found in Rickettsia bellii (strain OSU 85-389).